Here is a 240-residue protein sequence, read N- to C-terminus: Biosynthetic peptidoglycan transglycosylase (240 aa).

A helical membrane pass occupies residues 12–31; the sequence is ALLWFAGGSVLLVLVFRFVP.

This sequence belongs to the glycosyltransferase 51 family.

The protein resides in the cell inner membrane. The catalysed reaction is [GlcNAc-(1-&gt;4)-Mur2Ac(oyl-L-Ala-gamma-D-Glu-L-Lys-D-Ala-D-Ala)](n)-di-trans,octa-cis-undecaprenyl diphosphate + beta-D-GlcNAc-(1-&gt;4)-Mur2Ac(oyl-L-Ala-gamma-D-Glu-L-Lys-D-Ala-D-Ala)-di-trans,octa-cis-undecaprenyl diphosphate = [GlcNAc-(1-&gt;4)-Mur2Ac(oyl-L-Ala-gamma-D-Glu-L-Lys-D-Ala-D-Ala)](n+1)-di-trans,octa-cis-undecaprenyl diphosphate + di-trans,octa-cis-undecaprenyl diphosphate + H(+). It functions in the pathway cell wall biogenesis; peptidoglycan biosynthesis. Its function is as follows. Peptidoglycan polymerase that catalyzes glycan chain elongation from lipid-linked precursors. In Pseudomonas fluorescens (strain Pf0-1), this protein is Biosynthetic peptidoglycan transglycosylase.